Here is a 102-residue protein sequence, read N- to C-terminus: Large ribosomal subunit protein bL21 (102 aa).

This sequence belongs to the bacterial ribosomal protein bL21 family. Part of the 50S ribosomal subunit. Contacts protein L20.

Functionally, this protein binds to 23S rRNA in the presence of protein L20. This chain is Large ribosomal subunit protein bL21, found in Syntrophotalea carbinolica (strain DSM 2380 / NBRC 103641 / GraBd1) (Pelobacter carbinolicus).